Here is a 188-residue protein sequence, read N- to C-terminus: Large ribosomal subunit protein eL18 (188 aa).

Lysine 119 participates in a covalent cross-link: Glycyl lysine isopeptide (Lys-Gly) (interchain with G-Cter in SUMO2). Serine 130 carries the phosphoserine modification. Residues 150–188 (RHFGKAPGTPHSHTKPYVRSKGRKFERARGRRASRGYKN) form a disordered region. Position 158 is a phosphothreonine (threonine 158). 2 stretches are compositionally biased toward basic residues: residues 161-171 (SHTKPYVRSKG) and 178-188 (RGRRASRGYKN). A Glycyl lysine isopeptide (Lys-Gly) (interchain with G-Cter in SUMO2) cross-link involves residue lysine 164.

The protein belongs to the eukaryotic ribosomal protein eL18 family. In terms of assembly, component of the large ribosomal subunit.

The protein resides in the cytoplasm. It is found in the cytosol. Its subcellular location is the rough endoplasmic reticulum. In terms of biological role, component of the large ribosomal subunit. The ribosome is a large ribonucleoprotein complex responsible for the synthesis of proteins in the cell. The protein is Large ribosomal subunit protein eL18 (Rpl18) of Rattus norvegicus (Rat).